The following is a 391-amino-acid chain: Small ribosomal subunit protein bS1 (391 aa).

4 S1 motif domains span residues 16–90 (GDKV…LSRR), 108–173 (NEII…LSRK), 194–262 (GDVI…LSIK), and 279–348 (NDVI…LSIK).

Belongs to the bacterial ribosomal protein bS1 family.

In terms of biological role, binds mRNA; thus facilitating recognition of the initiation point. It is needed to translate mRNA with a short Shine-Dalgarno (SD) purine-rich sequence. The polypeptide is Small ribosomal subunit protein bS1 (rpsA) (Staphylococcus aureus (strain N315)).